A 300-amino-acid chain; its full sequence is Protein FANTASTIC FOUR 4 (300 aa).

The segment covering 30-56 (PQLSTPLKSHFQNSSIAPQDNPITINA) has biased composition (polar residues). 3 disordered regions span residues 30–104 (PQLS…SPSS), 142–170 (TMETRTTSTTSNPSRQDRKRNTMASLPPP), and 227–264 (TETKEEKEEEEEETIETVRDNEEEIPEYKEEEEEKEEE). Composition is skewed to low complexity over residues 58-88 (SLPSSSPNPSSNSDTNSGSWSFLESLSNSSS) and 142-151 (TMETRTTSTT). The region spanning 166–217 (SLPPPLTSMIGFDCIEVKSHRENGRLVMMATRPPPRNRCLQDRSNGCVRLAI) is the FAF domain. Acidic residues predominate over residues 233–262 (KEEEEEETIETVRDNEEEIPEYKEEEEEKE).

Belongs to the fantastic four family. As to expression, expressed in the shoot apex and young siliques. Detected in provascular and vascular tissue, but not in the vegetative meristem. In inflorescences, restricted to the base of the flower and to the vasculature of the stem and the pedicels, but absent from young flowers. Detected in the center of the inflorescence meristem.

Regulates the size of the shoot meristem by modulating the CLV3-WUS feedback loop. Can repress WUS but is under negative control by CLV3. The protein is Protein FANTASTIC FOUR 4 (FAF4) of Arabidopsis thaliana (Mouse-ear cress).